We begin with the raw amino-acid sequence, 76 residues long: UPF0291 protein BC_1827 (76 aa).

This sequence belongs to the UPF0291 family.

The protein resides in the cytoplasm. The polypeptide is UPF0291 protein BC_1827 (Bacillus cereus (strain ATCC 14579 / DSM 31 / CCUG 7414 / JCM 2152 / NBRC 15305 / NCIMB 9373 / NCTC 2599 / NRRL B-3711)).